A 224-amino-acid chain; its full sequence is 2-C-methyl-D-erythritol 4-phosphate cytidylyltransferase (224 aa).

This sequence belongs to the IspD/TarI cytidylyltransferase family. IspD subfamily.

It catalyses the reaction 2-C-methyl-D-erythritol 4-phosphate + CTP + H(+) = 4-CDP-2-C-methyl-D-erythritol + diphosphate. It functions in the pathway isoprenoid biosynthesis; isopentenyl diphosphate biosynthesis via DXP pathway; isopentenyl diphosphate from 1-deoxy-D-xylulose 5-phosphate: step 2/6. In terms of biological role, catalyzes the formation of 4-diphosphocytidyl-2-C-methyl-D-erythritol from CTP and 2-C-methyl-D-erythritol 4-phosphate (MEP). The sequence is that of 2-C-methyl-D-erythritol 4-phosphate cytidylyltransferase from Saccharopolyspora erythraea (strain ATCC 11635 / DSM 40517 / JCM 4748 / NBRC 13426 / NCIMB 8594 / NRRL 2338).